Reading from the N-terminus, the 310-residue chain is Aspartate carbamoyltransferase catalytic subunit (310 aa).

Residues arginine 60 and threonine 61 each coordinate carbamoyl phosphate. Residue lysine 88 coordinates L-aspartate. Residues arginine 110, histidine 138, and glutamine 141 each coordinate carbamoyl phosphate. Residues arginine 171 and arginine 225 each coordinate L-aspartate. Residues glycine 266 and proline 267 each coordinate carbamoyl phosphate.

It belongs to the aspartate/ornithine carbamoyltransferase superfamily. ATCase family. As to quaternary structure, heterododecamer (2C3:3R2) of six catalytic PyrB chains organized as two trimers (C3), and six regulatory PyrI chains organized as three dimers (R2).

It carries out the reaction carbamoyl phosphate + L-aspartate = N-carbamoyl-L-aspartate + phosphate + H(+). It participates in pyrimidine metabolism; UMP biosynthesis via de novo pathway; (S)-dihydroorotate from bicarbonate: step 2/3. Its function is as follows. Catalyzes the condensation of carbamoyl phosphate and aspartate to form carbamoyl aspartate and inorganic phosphate, the committed step in the de novo pyrimidine nucleotide biosynthesis pathway. This Christiangramia forsetii (strain DSM 17595 / CGMCC 1.15422 / KT0803) (Gramella forsetii) protein is Aspartate carbamoyltransferase catalytic subunit.